Consider the following 182-residue polypeptide: Protein GrpE (182 aa).

The protein belongs to the GrpE family. In terms of assembly, homodimer.

It localises to the cytoplasm. Its function is as follows. Participates actively in the response to hyperosmotic and heat shock by preventing the aggregation of stress-denatured proteins, in association with DnaK and GrpE. It is the nucleotide exchange factor for DnaK and may function as a thermosensor. Unfolded proteins bind initially to DnaJ; upon interaction with the DnaJ-bound protein, DnaK hydrolyzes its bound ATP, resulting in the formation of a stable complex. GrpE releases ADP from DnaK; ATP binding to DnaK triggers the release of the substrate protein, thus completing the reaction cycle. Several rounds of ATP-dependent interactions between DnaJ, DnaK and GrpE are required for fully efficient folding. This chain is Protein GrpE, found in Aquifex aeolicus (strain VF5).